The following is a 66-amino-acid chain: Large ribosomal subunit protein uL29 (66 aa).

It belongs to the universal ribosomal protein uL29 family.

This Helicobacter pylori (strain J99 / ATCC 700824) (Campylobacter pylori J99) protein is Large ribosomal subunit protein uL29 (rpmC).